A 547-amino-acid polypeptide reads, in one-letter code: Varicidin biosynthesis cluster MFS-type transporer (547 aa).

The span at 1-17 (MTTSTSKNAISKSSQED) shows a compositional bias: polar residues. The interval 1–33 (MTTSTSKNAISKSSQEDLCSDTKDKGSSGGGNE) is disordered. 11 helical membrane-spanning segments follow: residues 47 to 67 (LVLLFVGLALSVFCLSLVCIS), 156 to 176 (LAPSLLLPGLCPCIVAQSVFT), 183 to 203 (WCFWINLPLGGVTAVAVFLFV), 224 to 244 (ALGTCILMPLIICLLLALQWG), 252 to 272 (SWRVVLCLVLFTVLLVAWLYV), 296 to 316 (ILFTFGINGSMFIIVYYVPIW), 330 to 350 (INFLACSGSMSVAAIIAGTLV), 360 to 382 (GQWRIFNYTTLVSIATGLIWRYN), 392 to 412 (AGTLVMFGFGAGSGMQMPFIA), 422 to 442 (ISLGSSLIILIQTMGGAVFLA), and 503 to 523 (CFLVCIVLACLTIIADAGMEW).

This sequence belongs to the major facilitator superfamily. TCR/Tet family.

It is found in the cell membrane. Its function is as follows. MFS-type transporer; part of the gene cluster that mediates the biosynthesis of varicidin A, an antifungal natural product containing a cis-octahydrodecalin core. The polypeptide is Varicidin biosynthesis cluster MFS-type transporer (Talaromyces variabilis (Penicillium variabile)).